The chain runs to 202 residues: Pyridoxal 5'-phosphate synthase subunit PdxT (202 aa).

48–50 (GES) is a binding site for L-glutamine. Cysteine 80 (nucleophile) is an active-site residue. L-glutamine-binding positions include arginine 112 and 139–140 (IR). Active-site charge relay system residues include histidine 180 and glutamate 182.

The protein belongs to the glutaminase PdxT/SNO family. In the presence of PdxS, forms a dodecamer of heterodimers. Only shows activity in the heterodimer.

It catalyses the reaction aldehydo-D-ribose 5-phosphate + D-glyceraldehyde 3-phosphate + L-glutamine = pyridoxal 5'-phosphate + L-glutamate + phosphate + 3 H2O + H(+). The catalysed reaction is L-glutamine + H2O = L-glutamate + NH4(+). It functions in the pathway cofactor biosynthesis; pyridoxal 5'-phosphate biosynthesis. Catalyzes the hydrolysis of glutamine to glutamate and ammonia as part of the biosynthesis of pyridoxal 5'-phosphate. The resulting ammonia molecule is channeled to the active site of PdxS. This is Pyridoxal 5'-phosphate synthase subunit PdxT from Hyperthermus butylicus (strain DSM 5456 / JCM 9403 / PLM1-5).